The sequence spans 159 residues: Large ribosomal subunit protein uL15 (159 aa).

Over residues 1–18 (MKLNEIRDNEGSSKDRIR) the composition is skewed to basic and acidic residues. Residues 1-37 (MKLNEIRDNEGSSKDRIRVGRGIGSGKGKTGGRGVKG) form a disordered region. Gly residues predominate over residues 21–35 (RGIGSGKGKTGGRGV).

The protein belongs to the universal ribosomal protein uL15 family. As to quaternary structure, part of the 50S ribosomal subunit.

In terms of biological role, binds to the 23S rRNA. The protein is Large ribosomal subunit protein uL15 of Agrobacterium fabrum (strain C58 / ATCC 33970) (Agrobacterium tumefaciens (strain C58)).